Here is a 345-residue protein sequence, read N- to C-terminus: MKVAVLPGDGIGPEVTEAALKVLRALDEAEGLGLAYEVFPFGGAAIDAFGEPFPEPTRKGVEEAEAVLLGSVGGPKWDGLPRKISPETGLLSLRKSQDLFANLRPAKVFPGLERLSPLKEEIARGVDVLIVRELTGGIYFGEPRGMSEAEAWNTERYSKPEVERVARVAFEAARKRRKHVVSVDKANVLEVGEFWRKTVEEVGRGYPDVALEHQYVDAAAMHLVRSPARFDVVVTGNIFGDILSDLASVLPGSLGLLPSASLGRGTPVFEPVHGSAPDIAGKGIANPTAAILSAAMMLEHAFGLVELARKVEDAVAKALLETPPPDLGGSAGTEAFTATVLRHLA.

74 to 87 (GPKWDGLPRKISPE) is an NAD(+) binding site. Substrate contacts are provided by Arg-94, Arg-104, Arg-132, and Asp-217. Mg(2+) is bound by residues Asp-217, Asp-241, and Asp-245. Position 274 to 286 (274 to 286 (GSAPDIAGKGIAN)) interacts with NAD(+).

It belongs to the isocitrate and isopropylmalate dehydrogenases family. LeuB type 1 subfamily. Homodimer. Requires Mg(2+) as cofactor. The cofactor is Mn(2+).

It localises to the cytoplasm. It catalyses the reaction (2R,3S)-3-isopropylmalate + NAD(+) = 4-methyl-2-oxopentanoate + CO2 + NADH. It participates in amino-acid biosynthesis; L-leucine biosynthesis; L-leucine from 3-methyl-2-oxobutanoate: step 3/4. Functionally, catalyzes the oxidation of 3-carboxy-2-hydroxy-4-methylpentanoate (3-isopropylmalate) to 3-carboxy-4-methyl-2-oxopentanoate. The product decarboxylates to 4-methyl-2 oxopentanoate. The protein is 3-isopropylmalate dehydrogenase (leuB) of Thermus thermophilus.